The chain runs to 250 residues: UPF0736 protein BPUM_1067 (250 aa).

This sequence belongs to the UPF0736 family.

The protein is UPF0736 protein BPUM_1067 of Bacillus pumilus (strain SAFR-032).